The primary structure comprises 113 residues: UPF0342 protein MGAS2096_Spy0691 (113 aa).

It belongs to the UPF0342 family.

This chain is UPF0342 protein MGAS2096_Spy0691, found in Streptococcus pyogenes serotype M12 (strain MGAS2096).